Reading from the N-terminus, the 215-residue chain is Protein GET1 (215 aa).

Residues 1–4 (MINL) lie on the Lumenal side of the membrane. Residues 5-24 (ALVIFLCTLLNQIVSWVGKS) traverse the membrane as a helical segment. Topologically, residues 25 to 108 (VLQEIAFTAY…SFSKKFSTLL (84 aa)) are cytoplasmic. Positions 73–94 (AKLRRKLDKGLADLEKTNNTLS) form a coiled coil. Residues 109–129 (WLMTTGAQFLLSWWFRKQPIF) form a helical membrane-spanning segment. Residues 130 to 153 (WLPEGWVPYPVAWLLSFPSAPIGS) lie on the Lumenal side of the membrane. The chain crosses the membrane as a helical span at residues 154–170 (VSSGAWGAICRRVLSTL). At 171–215 (QEIIQSVLAPSPAATGPVPTGPSSAKNDQPEAKIEALALEHEKLD) the chain is on the cytoplasmic side. The tract at residues 181 to 202 (SPAATGPVPTGPSSAKNDQPEA) is disordered.

Belongs to the WRB/GET1 family. In terms of assembly, interacts with GET3.

The protein resides in the endoplasmic reticulum membrane. In terms of biological role, required for the post-translational delivery of tail-anchored (TA) proteins to the endoplasmic reticulum. Acts as a membrane receptor for soluble GET3, which recognizes and selectively binds the transmembrane domain of TA proteins in the cytosol. The polypeptide is Protein GET1 (Cryptococcus neoformans var. neoformans serotype D (strain B-3501A) (Filobasidiella neoformans)).